Here is a 389-residue protein sequence, read N- to C-terminus: Succinate--CoA ligase [ADP-forming] subunit beta (389 aa).

Positions 9-236 (RDMFEAHGVP…KDAADPLEAK (228 aa)) constitute an ATP-grasp domain. ATP is bound by residues Lys-45, 52-54 (GRG), Ala-94, and Glu-99. Residues Asn-191 and Asp-205 each contribute to the Mg(2+) site. Residues Asn-256 and 318–320 (GIT) contribute to the substrate site.

It belongs to the succinate/malate CoA ligase beta subunit family. In terms of assembly, heterotetramer of two alpha and two beta subunits. The cofactor is Mg(2+).

The catalysed reaction is succinate + ATP + CoA = succinyl-CoA + ADP + phosphate. The enzyme catalyses GTP + succinate + CoA = succinyl-CoA + GDP + phosphate. It functions in the pathway carbohydrate metabolism; tricarboxylic acid cycle; succinate from succinyl-CoA (ligase route): step 1/1. In terms of biological role, succinyl-CoA synthetase functions in the citric acid cycle (TCA), coupling the hydrolysis of succinyl-CoA to the synthesis of either ATP or GTP and thus represents the only step of substrate-level phosphorylation in the TCA. The beta subunit provides nucleotide specificity of the enzyme and binds the substrate succinate, while the binding sites for coenzyme A and phosphate are found in the alpha subunit. This chain is Succinate--CoA ligase [ADP-forming] subunit beta, found in Pseudarthrobacter chlorophenolicus (strain ATCC 700700 / DSM 12829 / CIP 107037 / JCM 12360 / KCTC 9906 / NCIMB 13794 / A6) (Arthrobacter chlorophenolicus).